Here is a 186-residue protein sequence, read N- to C-terminus: Elongation factor P (186 aa).

Belongs to the elongation factor P family.

The protein resides in the cytoplasm. The protein operates within protein biosynthesis; polypeptide chain elongation. Its function is as follows. Involved in peptide bond synthesis. Stimulates efficient translation and peptide-bond synthesis on native or reconstituted 70S ribosomes in vitro. Probably functions indirectly by altering the affinity of the ribosome for aminoacyl-tRNA, thus increasing their reactivity as acceptors for peptidyl transferase. The sequence is that of Elongation factor P from Brucella abortus (strain S19).